Consider the following 355-residue polypeptide: Methylthioribose-1-phosphate isomerase (355 aa).

Residues 53 to 55 (RGA), Arg-96, and Gln-205 each bind substrate. Asp-246 acts as the Proton donor in catalysis. 256 to 257 (NK) lines the substrate pocket.

This sequence belongs to the eIF-2B alpha/beta/delta subunits family. MtnA subfamily.

The enzyme catalyses 5-(methylsulfanyl)-alpha-D-ribose 1-phosphate = 5-(methylsulfanyl)-D-ribulose 1-phosphate. It functions in the pathway amino-acid biosynthesis; L-methionine biosynthesis via salvage pathway; L-methionine from S-methyl-5-thio-alpha-D-ribose 1-phosphate: step 1/6. Catalyzes the interconversion of methylthioribose-1-phosphate (MTR-1-P) into methylthioribulose-1-phosphate (MTRu-1-P). In Thermosynechococcus vestitus (strain NIES-2133 / IAM M-273 / BP-1), this protein is Methylthioribose-1-phosphate isomerase.